The sequence spans 601 residues: MALPSAAMQSNPEKLNLFHRLSSLPTTSLEYGNNRFPFFSSSAKSHFKKPTQACLSSTTHQEVRPLAYFPPTVWGNRFASLTFNPSEFESYDERVIVLKKKVKDILISSTSDSVETVILIDLLCRLGVSYHFENDIEELLSKIFNSQPDLVDEKECDLYTAAIVFRVFRQHGFKMSSDVFSKFKDSDGKFKESLRGDAKGMLSLFEASHLSVHGEDILEEAFAFTKDYLQSSAVELFPNLKRHITNALEQPFHSGVPRLEARKFIDLYEADIECRNETLLEFAKLDYNRVQLLHQQELCQFSKWWKDLNLASDIPYARDRMAEIFFWAVAMYFEPDYAHTRMIIAKVVLLISLIDDTIDAYATMEETHILAEAVARWDMSCLEKLPDYMKVIYKLLLNTFSEFEKELTAEGKSYSVKYGREAFQELVRGYYLEAVWRDEGKIPSFDDYLYNGSMTTGLPLVSTASFMGVQEITGLNEFQWLETNPKLSYASGAFIRLVNDLTSHVTEQQRGHVASCIDCYMNQHGVSKDEAVKILQKMATDCWKEINEECMRQSQVSVGHLMRIVNLARLTDVSYKYGDGYTDSQQLKQFVKGLFVDPISI.

Residues M1–S56 constitute a chloroplast transit peptide. Positions 355, 359, 499, 503, and 507 each coordinate Mg(2+). The short motif at D355–D359 is the DDXXD motif element.

It belongs to the terpene synthase family. Requires Mg(2+) as cofactor.

Its subcellular location is the plastid. The protein localises to the chloroplast. The catalysed reaction is (2E,6E,10E)-geranylgeranyl diphosphate = casbene + diphosphate. Functionally, catalyzes the cyclization of geranylgeranyl diphosphate to casbene, a diterpene phytoalexin with antibacterial and antifungal activity. This chain is Casbene synthase, chloroplastic, found in Ricinus communis (Castor bean).